We begin with the raw amino-acid sequence, 622 residues long: Arginine--tRNA ligase (622 aa).

Residues 127–137 (ANPVHPLHVGH) carry the 'HIGH' region motif.

Belongs to the class-I aminoacyl-tRNA synthetase family.

It is found in the cytoplasm. The enzyme catalyses tRNA(Arg) + L-arginine + ATP = L-arginyl-tRNA(Arg) + AMP + diphosphate. The polypeptide is Arginine--tRNA ligase (Ignicoccus hospitalis (strain KIN4/I / DSM 18386 / JCM 14125)).